The following is a 603-amino-acid chain: Mono(2-hydroxyethyl) terephthalate hydrolase (603 aa).

The signal sequence occupies residues 1–17; the sequence is MQTTVTTMLLASVALAA. A lipid anchor (N-palmitoyl cysteine) is attached at C18. A lipid anchor (S-diacylglycerol cysteine) is attached at C18. The disordered stretch occupies residues 24–44; that stretch reads TPLPLPQQQPPQQEPPPPPVP. Over residues 26-44 the composition is skewed to pro residues; it reads LPLPQQQPPQQEPPPPPVP. C51 and C92 are joined by a disulfide. Residue G132 coordinates 4-[(2-hydroxyethoxy)carbonyl]benzoate. 4 disulfides stabilise this stretch: C224-C529, C303-C320, C340-C348, and C577-C599. The active-site Acyl-ester intermediate is S225. E226 contacts 4-[(2-hydroxyethoxy)carbonyl]benzoate. Ca(2+) is bound by residues D304, D307, L309, D311, and I313. 4-[(2-hydroxyethoxy)carbonyl]benzoate is bound by residues R411 and S416. Active-site charge relay system residues include D492 and H528. H528 lines the 4-[(2-hydroxyethoxy)carbonyl]benzoate pocket.

This sequence belongs to the tannase family.

Its subcellular location is the cell outer membrane. The enzyme catalyses 4-[(2-hydroxyethoxy)carbonyl]benzoate + H2O = terephthalate + ethylene glycol + H(+). Its function is as follows. Involved in the degradation and assimilation of the plastic poly(ethylene terephthalate) (PET), which allows I.sakaiensis to use PET as its major energy and carbon source for growth. Likely acts synergistically with PETase to depolymerize PET. Catalyzes the hydrolysis of mono(2-hydroxyethyl) terephthalate (MHET) into its two environmentally benign monomers, terephthalate and ethylene glycol. Does not show activity against PET, bis(hydroxyethyl) terephthalate (BHET), pNP-aliphatic esters or typical aromatic ester compounds catalyzed by the tannase family enzymes, such as ethyl gallate and ethyl ferulate. The chain is Mono(2-hydroxyethyl) terephthalate hydrolase from Piscinibacter sakaiensis (Ideonella sakaiensis).